Here is a 293-residue protein sequence, read N- to C-terminus: Protease HtpX homolog (293 aa).

2 helical membrane passes run 4–24 (IFLFIVTNLAVMVVLSATLRV) and 40–60 (SLLILSVVIGFTGAIISLLIS). H146 is a Zn(2+) binding site. E147 is a catalytic residue. H150 serves as a coordination point for Zn(2+). Helical transmembrane passes span 161-181 (LIQGVVNTFVVFLARVVGYFI) and 197-217 (FITVLVCEIIFGLLASIIVAW). A Zn(2+)-binding site is contributed by E223.

Belongs to the peptidase M48B family. It depends on Zn(2+) as a cofactor.

The protein localises to the cell inner membrane. The sequence is that of Protease HtpX homolog from Bordetella petrii (strain ATCC BAA-461 / DSM 12804 / CCUG 43448).